Reading from the N-terminus, the 272-residue chain is Arylesterase (272 aa).

The AB hydrolase-1 domain occupies 21-253; it reads KPVLFSHGWL…LKVYKDAPHG (233 aa). Tryptophan 29 lines the acetate pocket. Serine 95 is an active-site residue. Methionine 96 contributes to the acetate binding site. Active-site residues include aspartate 223 and histidine 252.

Belongs to the AB hydrolase superfamily. Bacterial non-heme haloperoxidase / perhydrolase family. Dimer of trimers.

The catalysed reaction is a phenyl acetate + H2O = a phenol + acetate + H(+). The enzyme catalyses peracetic acid + H2O = acetate + H2O2 + H(+). It catalyses the reaction a percarboxylic acid + H2O = a carboxylate + H2O2 + H(+). In terms of biological role, hydrolyzes phenolic esters, such as phenyl acetate, nitrophenyl acetate and naphtyl acetate. Can act on a wide range of esters, but reaction rate and enantioselectivity differ significantly depending on the substrate. Shows a preference for esters with small acyl groups. Also shows low perhydrolase activity, and catalyzes the reversible formation of peroxycarboxylic acids from carboxylic acids and hydrogen peroxide. In vitro, enzyme-generated peracetic acid oxidizes bromide ion to bromonium, which reacts with monochlorodimedone to form bromochlorodimedone. The chain is Arylesterase from Pseudomonas fluorescens.